Consider the following 215-residue polypeptide: ATP-dependent dethiobiotin synthetase BioD (215 aa).

13–18 is an ATP binding site; sequence DIGKTV. Threonine 17 provides a ligand contact to Mg(2+). Residue lysine 38 is part of the active site. Substrate is bound at residue threonine 42. Residues aspartate 50, 115–118, and 175–176 contribute to the ATP site; these read EGAG and NH. Positions 50 and 115 each coordinate Mg(2+).

It belongs to the dethiobiotin synthetase family. Homodimer. Mg(2+) is required as a cofactor.

It localises to the cytoplasm. It catalyses the reaction (7R,8S)-7,8-diammoniononanoate + CO2 + ATP = (4R,5S)-dethiobiotin + ADP + phosphate + 3 H(+). It functions in the pathway cofactor biosynthesis; biotin biosynthesis; biotin from 7,8-diaminononanoate: step 1/2. In terms of biological role, catalyzes a mechanistically unusual reaction, the ATP-dependent insertion of CO2 between the N7 and N8 nitrogen atoms of 7,8-diaminopelargonic acid (DAPA, also called 7,8-diammoniononanoate) to form a ureido ring. The protein is ATP-dependent dethiobiotin synthetase BioD of Neisseria meningitidis serogroup B (strain ATCC BAA-335 / MC58).